We begin with the raw amino-acid sequence, 133 residues long: Ribonuclease P protein component (133 aa).

The protein belongs to the RnpA family. Consists of a catalytic RNA component (M1 or rnpB) and a protein subunit.

It carries out the reaction Endonucleolytic cleavage of RNA, removing 5'-extranucleotides from tRNA precursor.. RNaseP catalyzes the removal of the 5'-leader sequence from pre-tRNA to produce the mature 5'-terminus. It can also cleave other RNA substrates such as 4.5S RNA. The protein component plays an auxiliary but essential role in vivo by binding to the 5'-leader sequence and broadening the substrate specificity of the ribozyme. This Corynebacterium glutamicum (strain ATCC 13032 / DSM 20300 / JCM 1318 / BCRC 11384 / CCUG 27702 / LMG 3730 / NBRC 12168 / NCIMB 10025 / NRRL B-2784 / 534) protein is Ribonuclease P protein component.